Here is a 293-residue protein sequence, read N- to C-terminus: 1D-myo-inositol 2-acetamido-2-deoxy-alpha-D-glucopyranoside deacetylase (293 aa).

3 residues coordinate Zn(2+): His-15, Asp-18, and His-148.

Belongs to the MshB deacetylase family. Zn(2+) serves as cofactor.

It carries out the reaction 1D-myo-inositol 2-acetamido-2-deoxy-alpha-D-glucopyranoside + H2O = 1D-myo-inositol 2-amino-2-deoxy-alpha-D-glucopyranoside + acetate. In terms of biological role, catalyzes the deacetylation of 1D-myo-inositol 2-acetamido-2-deoxy-alpha-D-glucopyranoside (GlcNAc-Ins) in the mycothiol biosynthesis pathway. This is 1D-myo-inositol 2-acetamido-2-deoxy-alpha-D-glucopyranoside deacetylase from Corynebacterium diphtheriae (strain ATCC 700971 / NCTC 13129 / Biotype gravis).